The following is a 283-amino-acid chain: uncharacterized protein (283 aa).

The disordered stretch occupies residues 1–21; that stretch reads MSAYTHPMERELSGLSSRGNS. Residues 41–61 form a helical membrane-spanning segment; sequence SIFIASLVTFGVLMITLLIAL.

Belongs to the APS1/VSP family.

Its subcellular location is the membrane. This is an uncharacterized protein from Arabidopsis thaliana (Mouse-ear cress).